The sequence spans 245 residues: MGTDVWDDKQAAPPRRRRCLRWVLAAPLLFAAASVLQVLFLRVVDPPISSMMVGRYLEAWGEGDWSFSLHQRWRDYDKIAASLPISVVAAEDQQFPMHHGFDLQAIEKARDHNARGGRVRGASTISQQVAKNVFLWQGRSWVRKGLEAWYTVLIELFWPKQRILEMYLNVAEFGDGVYGAQAAAQQFWGKDAAGLSPTESARLAAVLPSPRHYDARSPGAFVQRRTMWIQRQARQLGGPAYLPAP.

Residues 19–41 (CLRWVLAAPLLFAAASVLQVLFL) traverse the membrane as a helical segment.

The protein belongs to the glycosyltransferase 51 family.

It localises to the cell inner membrane. It catalyses the reaction [GlcNAc-(1-&gt;4)-Mur2Ac(oyl-L-Ala-gamma-D-Glu-L-Lys-D-Ala-D-Ala)](n)-di-trans,octa-cis-undecaprenyl diphosphate + beta-D-GlcNAc-(1-&gt;4)-Mur2Ac(oyl-L-Ala-gamma-D-Glu-L-Lys-D-Ala-D-Ala)-di-trans,octa-cis-undecaprenyl diphosphate = [GlcNAc-(1-&gt;4)-Mur2Ac(oyl-L-Ala-gamma-D-Glu-L-Lys-D-Ala-D-Ala)](n+1)-di-trans,octa-cis-undecaprenyl diphosphate + di-trans,octa-cis-undecaprenyl diphosphate + H(+). Its pathway is cell wall biogenesis; peptidoglycan biosynthesis. Its function is as follows. Peptidoglycan polymerase that catalyzes glycan chain elongation from lipid-linked precursors. The polypeptide is Biosynthetic peptidoglycan transglycosylase (Xanthomonas oryzae pv. oryzae (strain KACC10331 / KXO85)).